Here is a 501-residue protein sequence, read N- to C-terminus: COP9 signalosome complex subunit 3 (501 aa).

Residues 275-445 (RFEDALFLLE…VFWTELSPVP (171 aa)) enclose the PCI domain.

Belongs to the CSN3 family. As to quaternary structure, component of the CSN complex, probably composed of csn-1, csn-2, csn-3, csn-4, csn-5, csn-6 and csn-7. Within the complex it probably interacts directly with csn-2 and csn-4. May interact with itself.

Its subcellular location is the cytoplasm. The protein resides in the nucleus. Component of the COP9 signalosome complex (CSN), a complex involved in various cellular and developmental processes. The CSN complex is an essential regulator of the ubiquitin (Ubl) conjugation pathway by mediating the deneddylation of the cullin subunits of the SCF-type E3 ligase complexes, leading to decrease the Ubl ligase activity of SCF. The CSN complex plays an essential role in embryogenesis and oogenesis and is required to regulate microtubule stability in the early embryo. Mediates mei-3/katanin targeting for degradation at the meiosis to mitosis transition via deneddylation of cul-3. The sequence is that of COP9 signalosome complex subunit 3 (csn-3) from Caenorhabditis elegans.